Here is a 239-residue protein sequence, read N- to C-terminus: Fatty acid metabolism regulator protein (239 aa).

One can recognise an HTH gntR-type domain in the interval 6–74; sequence QSPAGFAEEY…HGKPTKVNNF (69 aa). Residues 34–53 constitute a DNA-binding region (H-T-H motif); sequence ERELSELIGVTRTTLREVLQ.

Homodimer.

It is found in the cytoplasm. Functionally, multifunctional regulator of fatty acid metabolism. This Proteus mirabilis (strain HI4320) protein is Fatty acid metabolism regulator protein.